The following is a 607-amino-acid chain: Chaperone protein DnaK (607 aa).

The residue at position 173 (T173) is a Phosphothreonine; by autocatalysis. Positions 577 to 588 (AQAQQGAEGAAS) are enriched in low complexity. The interval 577–607 (AQAQQGAEGAASQDDDVVDADFTEVKDDDNK) is disordered. The span at 589–598 (QDDDVVDADF) shows a compositional bias: acidic residues.

This sequence belongs to the heat shock protein 70 family.

Acts as a chaperone. This chain is Chaperone protein DnaK, found in Macrococcus caseolyticus (strain JCSC5402) (Macrococcoides caseolyticum).